A 463-amino-acid polypeptide reads, in one-letter code: Methionine aminopeptidase 2-2 (463 aa).

The interval 1–107 is disordered; sequence MGAKTFEGGD…VPLSQLFPDG (107 aa). Residues 37–53 are compositionally biased toward acidic residues; that stretch reads EDGDGEFGTDDDDDGDG. Positions 69–83 are enriched in basic residues; sequence PKKRKRSKKKKSNKK. Position 215 (H215) interacts with substrate. A divalent metal cation is bound by residues D236, D247, and H316. Residue H324 participates in substrate binding. Positions 349 and 444 each coordinate a divalent metal cation.

The protein belongs to the peptidase M24A family. Methionine aminopeptidase eukaryotic type 2 subfamily. Requires Co(2+) as cofactor. Zn(2+) serves as cofactor. Mn(2+) is required as a cofactor. It depends on Fe(2+) as a cofactor.

Its subcellular location is the cytoplasm. The catalysed reaction is Release of N-terminal amino acids, preferentially methionine, from peptides and arylamides.. Its function is as follows. Cotranslationally removes the N-terminal methionine from nascent proteins. The N-terminal methionine is often cleaved when the second residue in the primary sequence is small and uncharged (Met-Ala-, Cys, Gly, Pro, Ser, Thr, or Val). This is Methionine aminopeptidase 2-2 from Talaromyces marneffei (strain ATCC 18224 / CBS 334.59 / QM 7333) (Penicillium marneffei).